The primary structure comprises 694 residues: Glycine--tRNA ligase beta subunit (694 aa).

It belongs to the class-II aminoacyl-tRNA synthetase family. Tetramer of two alpha and two beta subunits.

The protein localises to the cytoplasm. The catalysed reaction is tRNA(Gly) + glycine + ATP = glycyl-tRNA(Gly) + AMP + diphosphate. In Lactiplantibacillus plantarum (strain ATCC BAA-793 / NCIMB 8826 / WCFS1) (Lactobacillus plantarum), this protein is Glycine--tRNA ligase beta subunit.